The following is a 184-amino-acid chain: GTP cyclohydrolase 1 (184 aa).

The Zn(2+) site is built by Cys75, His78, and Cys146.

This sequence belongs to the GTP cyclohydrolase I family. Homomer.

The catalysed reaction is GTP + H2O = 7,8-dihydroneopterin 3'-triphosphate + formate + H(+). It functions in the pathway cofactor biosynthesis; 7,8-dihydroneopterin triphosphate biosynthesis; 7,8-dihydroneopterin triphosphate from GTP: step 1/1. This Teredinibacter turnerae (strain ATCC 39867 / T7901) protein is GTP cyclohydrolase 1.